Here is a 95-residue protein sequence, read N- to C-terminus: UPF0132 membrane protein AF_0736 (95 aa).

Helical transmembrane passes span 2–22 (CYTLGFVTGVLFLLFDRSPFV), 32–52 (TFSTITALVILLPVLPGGALL), and 55–75 (VVMAFSIILWAFCIVKASRGE).

It belongs to the UPF0132 family.

It is found in the cell membrane. This Archaeoglobus fulgidus (strain ATCC 49558 / DSM 4304 / JCM 9628 / NBRC 100126 / VC-16) protein is UPF0132 membrane protein AF_0736.